The chain runs to 468 residues: UDP-N-acetylmuramate--L-alanine ligase (468 aa).

122–128 (GSHGKTT) serves as a coordination point for ATP.

It belongs to the MurCDEF family.

It is found in the cytoplasm. It catalyses the reaction UDP-N-acetyl-alpha-D-muramate + L-alanine + ATP = UDP-N-acetyl-alpha-D-muramoyl-L-alanine + ADP + phosphate + H(+). Its pathway is cell wall biogenesis; peptidoglycan biosynthesis. Its function is as follows. Cell wall formation. In Synechococcus sp. (strain CC9902), this protein is UDP-N-acetylmuramate--L-alanine ligase.